Here is a 203-residue protein sequence, read N- to C-terminus: Pyridoxine/pyridoxamine 5'-phosphate oxidase (203 aa).

FMN-binding positions include 51–56 (RMVLLK), 66–67 (YT), Arg72, Lys73, and Gln95. Residue Lys56 participates in substrate binding. 3 residues coordinate substrate: Tyr113, Arg117, and Ser121. Residues 130-131 (QS) and Trp175 each bind FMN. Residue 181–183 (RLH) participates in substrate binding. Arg185 contributes to the FMN binding site.

It belongs to the pyridoxamine 5'-phosphate oxidase family. As to quaternary structure, homodimer. FMN is required as a cofactor.

The enzyme catalyses pyridoxamine 5'-phosphate + O2 + H2O = pyridoxal 5'-phosphate + H2O2 + NH4(+). It catalyses the reaction pyridoxine 5'-phosphate + O2 = pyridoxal 5'-phosphate + H2O2. It participates in cofactor metabolism; pyridoxal 5'-phosphate salvage; pyridoxal 5'-phosphate from pyridoxamine 5'-phosphate: step 1/1. It functions in the pathway cofactor metabolism; pyridoxal 5'-phosphate salvage; pyridoxal 5'-phosphate from pyridoxine 5'-phosphate: step 1/1. Functionally, catalyzes the oxidation of either pyridoxine 5'-phosphate (PNP) or pyridoxamine 5'-phosphate (PMP) into pyridoxal 5'-phosphate (PLP). The protein is Pyridoxine/pyridoxamine 5'-phosphate oxidase of Novosphingobium aromaticivorans (strain ATCC 700278 / DSM 12444 / CCUG 56034 / CIP 105152 / NBRC 16084 / F199).